A 157-amino-acid chain; its full sequence is Ribosomal RNA large subunit methyltransferase H (157 aa).

S-adenosyl-L-methionine-binding positions include L75, G106, and 125–130 (FSELTF).

Belongs to the RNA methyltransferase RlmH family. As to quaternary structure, homodimer.

The protein localises to the cytoplasm. It catalyses the reaction pseudouridine(1915) in 23S rRNA + S-adenosyl-L-methionine = N(3)-methylpseudouridine(1915) in 23S rRNA + S-adenosyl-L-homocysteine + H(+). Functionally, specifically methylates the pseudouridine at position 1915 (m3Psi1915) in 23S rRNA. The sequence is that of Ribosomal RNA large subunit methyltransferase H from Malacoplasma penetrans (strain HF-2) (Mycoplasma penetrans).